We begin with the raw amino-acid sequence, 458 residues long: Vacuolar basic amino acid transporter 3 (458 aa).

Residues 1 to 9 (MNMLIVGRV) are Cytoplasmic-facing. The helical transmembrane segment at 10-30 (VASVGGSGLQTLCFVIGCTMV) threads the bilayer. Residues 31–36 (GERSRP) are Vacuolar-facing. Residues 37–57 (LVISILSCAFAVAAIVGPIIG) form a helical membrane-spanning segment. Topologically, residues 58–67 (GAFTTHVTWR) are cytoplasmic. The helical transmembrane segment at 68 to 88 (WCFYINLPIGGLAIIMFLLTY) threads the bilayer. Residues 89–132 (KAENKGILQQIKDAIGTISSFTFSKFRHQVNFKRLMNGIIFKFD) are Vacuolar-facing. The chain crosses the membrane as a helical span at residues 133-153 (FFGFALCSAGLVLFLLGLTFG). The Cytoplasmic segment spans residues 154 to 163 (GNKYSWNSGQ). Residues 164–184 (VIAYLVLGVLLFIFSLVYDFF) form a helical membrane-spanning segment. Residues 185-205 (LFDKFNPEPDNISYRPLLLRR) are Vacuolar-facing. Residue Asn195 is glycosylated (N-linked (GlcNAc...) asparagine). The helical transmembrane segment at 206–226 (LVAKPAIIIINMVTFLLCTGY) threads the bilayer. Residues 227–248 (NGQMIYSVQFFQLIFASSAWKA) are Cytoplasmic-facing. Residues 249–269 (GLHLIPIVITNVIAAIASGVI) traverse the membrane as a helical segment. At 270-277 (TKKLGLVK) the chain is on the vacuolar side. The helical transmembrane segment at 278-298 (PLLIFGGVLGVIGAGLMTLMT) threads the bilayer. Over 299-306 (NTSTKSTQ) the chain is Cytoplasmic. A helical membrane pass occupies residues 307-327 (IGVLLLPGFSLGFALQASLMS). Over 328–415 (AQLQITKDRP…STIGNILSDS (88 aa)) the chain is Vacuolar. The helical transmembrane segment at 416–436 (IKNVFWMDLGFYALGFLFCSF) threads the bilayer. At 437–458 (SSNKKLIIPKKDETPEDNLEDK) the chain is on the cytoplasmic side.

This sequence belongs to the major facilitator superfamily.

It is found in the vacuole membrane. Functionally, transporter required for vacuolar uptake of histidine and lysine. The polypeptide is Vacuolar basic amino acid transporter 3 (VBA3) (Saccharomyces cerevisiae (strain ATCC 204508 / S288c) (Baker's yeast)).